Here is a 152-residue protein sequence, read N- to C-terminus: UPF0178 protein NIS_0137 (152 aa).

Belongs to the UPF0178 family.

This chain is UPF0178 protein NIS_0137, found in Nitratiruptor sp. (strain SB155-2).